Reading from the N-terminus, the 234-residue chain is MAAKIFCLLMLLGLSASAATATIFPQCSQAPIASLLPPYLSSAVSSVCENPILQPYRIQQAIAAGILPLSPLFLQQSSALLQQLPLVHLLAQNIRAQQLQQLVLANLAAYSQQQQFLPFNQLGSLNSASYLQQQQLPFSQLPAAYPQQFLPFNQLAALNSPAYLQQQQLLPFSQLAGVSPATFLTQPQLLPFYQHVAPNAGTLLQLQQLLPFNQLALTNPAVFYQQPIIGGALF.

Positions 1–21 (MAAKIFCLLMLLGLSASAATA) are cleaved as a signal peptide.

This sequence belongs to the zein family.

Zeins are major seed storage proteins. This is Zein-alpha 19B1 from Zea mays (Maize).